The sequence spans 413 residues: Inactive squalene synthase 2 (413 aa).

An N-acetylglycine modification is found at G2. A run of 2 helical transmembrane segments spans residues 283-303 (AIFQ…ALCY) and 390-410 (AIFV…LKAN).

It belongs to the phytoene/squalene synthase family. Mg(2+) serves as cofactor. The cofactor is Mn(2+). As to expression, mostly expressed in hypocotyls, leaves and cotyledons, and, to a lower extent, in stems.

The protein resides in the endoplasmic reticulum membrane. The protein is Inactive squalene synthase 2 of Arabidopsis thaliana (Mouse-ear cress).